The sequence spans 429 residues: Glutamate-1-semialdehyde 2,1-aminomutase 2 (429 aa).

Lys-268 bears the N6-(pyridoxal phosphate)lysine mark.

Belongs to the class-III pyridoxal-phosphate-dependent aminotransferase family. HemL subfamily. Homodimer. Pyridoxal 5'-phosphate serves as cofactor.

It localises to the cytoplasm. It carries out the reaction (S)-4-amino-5-oxopentanoate = 5-aminolevulinate. Its pathway is porphyrin-containing compound metabolism; protoporphyrin-IX biosynthesis; 5-aminolevulinate from L-glutamyl-tRNA(Glu): step 2/2. The sequence is that of Glutamate-1-semialdehyde 2,1-aminomutase 2 from Bacillus mycoides (strain KBAB4) (Bacillus weihenstephanensis).